We begin with the raw amino-acid sequence, 439 residues long: AT-hook motif nuclear-localized protein 13 (439 aa).

Disordered stretches follow at residues 1–46, 69–216, and 342–439; these read MDSR…NSYN, QRLP…LGGT, and GRKQ…NSPQ. 2 stretches are compositionally biased toward low complexity: residues 9 to 31 and 79 to 95; these read QQQQ…QQQQ and PHQP…PQQQ. Polar residues predominate over residues 109 to 120; the sequence is SPSSVAATQQHS. A compositionally biased stretch (basic residues) spans 130–139; that stretch reads VKKKRGRPRK. The Bipartite nuclear localization signal signature appears at 131–139; the sequence is KKKRGRPRK. Residues 131–143 constitute a DNA-binding region (a.T hook 1); sequence KKKRGRPRKYAAD. 2 stretches are compositionally biased toward gly residues: residues 143-152 and 171-183; these read DGGGGGGGGS and YGGG…GGDS. The segment at residues 196–208 is a DNA-binding region (a.T hook 2); sequence KRNRGRPPGSGKK. The PPC domain occupies 217–359; it reads GGVGFTPHVI…GRAQNTPEPA (143 aa). A compositionally biased stretch (polar residues) spans 347–357; the sequence is QSAGRAQNTPE. Composition is skewed to low complexity over residues 376–386 and 403–416; these read SPRSQGQQHSS and NNNN…FGNS. Residues 428–439 show a composition bias toward polar residues; sequence MYQNLWPGNSPQ.

It localises to the nucleus. In terms of biological role, transcription factor that specifically binds AT-rich DNA sequences related to the nuclear matrix attachment regions (MARs). This chain is AT-hook motif nuclear-localized protein 13, found in Arabidopsis thaliana (Mouse-ear cress).